A 159-amino-acid polypeptide reads, in one-letter code: Phosphopantetheine adenylyltransferase (159 aa).

Substrate is bound at residue T8. ATP is bound by residues 8–9 (TF) and H16. Substrate-binding residues include K40, T72, and R86. ATP contacts are provided by residues 87–89 (GLR), E97, and 122–128 (YSFLSSS).

This sequence belongs to the bacterial CoaD family. Homohexamer. Requires Mg(2+) as cofactor.

The protein localises to the cytoplasm. It catalyses the reaction (R)-4'-phosphopantetheine + ATP + H(+) = 3'-dephospho-CoA + diphosphate. Its pathway is cofactor biosynthesis; coenzyme A biosynthesis; CoA from (R)-pantothenate: step 4/5. Its function is as follows. Reversibly transfers an adenylyl group from ATP to 4'-phosphopantetheine, yielding dephospho-CoA (dPCoA) and pyrophosphate. This Prochlorococcus marinus subsp. pastoris (strain CCMP1986 / NIES-2087 / MED4) protein is Phosphopantetheine adenylyltransferase.